Here is a 723-residue protein sequence, read N- to C-terminus: Dipeptidyl aminopeptidase BI (723 aa).

Residues 1–23 (MKPTSLLLAATVLMSTPITSALA) form the signal peptide. Residues S574, D659, and H694 each act as charge relay system in the active site.

Belongs to the peptidase S9A family. Monomer.

Nearly completely inhibited by 0.5 mM ZnCl(2), 0.1 mM N-tosyl-L-lysyl chloromethyl ketone (TLCK) and 0.1 mM leupeptin. Strongly inhibited by 0.5 mM CoCl(2) and 0.1 mM chymostatin. Activity is hardly affected by general serine protease inhibitors phenylmethanesulfonyl fluoride (PMSF), diisopropyl fluorophosphate (DFP) and N-tosyl-L-phenyl-alanyl chloromethyl ketone (TPCK) or by aspartyl protease inhibitor pepstatin A or by CaCl(2) and EDTA. Cysteine protease inhibitors, such as N-ethylmaleimide (NEM), iodoacetic acid and L-trans-epoxysuccinyl-leucylamido(4-guanido)butane (E-64) have no effect on activity. Functionally, sequentially removes dipeptide units (NH3-P2-P1-) from the amino termini of peptides and proteins. Is able to catalyze the removal of Asp-Arg from the amino termini of angiotensins I and II. Has slight endopeptidase activity on N-terminally blocked peptide derivatives which contain arginine residues at the P1 position. Does not hydrolyze Ala-Ala-Ala and Ala-Ala-Ala-Ala substrates or insulin beta chain. The chain is Dipeptidyl aminopeptidase BI from Pseudoxanthomonas mexicana.